The chain runs to 433 residues: Bifunctional urease accessory protein UreEF (433 aa).

A urease accessory protein UreE region spans residues 1–200 (MKIANTFIKR…VMATAASTAS (200 aa)). A urease accessory protein UreF region spans residues 200 to 433 (SMTPSLDAGQ…ETQFSRLFRS (234 aa)).

This sequence in the N-terminal section; belongs to the UreE family. The protein in the C-terminal section; belongs to the UreF family. As to quaternary structure, ureD, UreF and UreG form a complex that acts as a GTP-hydrolysis-dependent molecular chaperone, activating the urease apoprotein by helping to assemble the nickel containing metallocenter of UreC. The UreE protein probably delivers the nickel.

It is found in the cytoplasm. Involved in urease metallocenter assembly. Binds nickel. Probably functions as a nickel donor during metallocenter assembly. Its function is as follows. Required for maturation of urease via the functional incorporation of the urease nickel metallocenter. The polypeptide is Bifunctional urease accessory protein UreEF (ureEF) (Bordetella bronchiseptica (Alcaligenes bronchisepticus)).